We begin with the raw amino-acid sequence, 159 residues long: Ribosomal RNA large subunit methyltransferase H (159 aa).

S-adenosyl-L-methionine contacts are provided by residues Leu-76, Gly-108, and 127 to 132; that span reads FGLLTL.

The protein belongs to the RNA methyltransferase RlmH family. In terms of assembly, homodimer.

It localises to the cytoplasm. It carries out the reaction pseudouridine(1915) in 23S rRNA + S-adenosyl-L-methionine = N(3)-methylpseudouridine(1915) in 23S rRNA + S-adenosyl-L-homocysteine + H(+). Specifically methylates the pseudouridine at position 1915 (m3Psi1915) in 23S rRNA. The sequence is that of Ribosomal RNA large subunit methyltransferase H from Streptococcus pyogenes serotype M18 (strain MGAS8232).